We begin with the raw amino-acid sequence, 197 residues long: Phosphoheptose isomerase (197 aa).

Residues 36-197 (MTASLMNNGK…IDCLLLGVEE (162 aa)) form the SIS domain. Residue 51-53 (NGG) coordinates substrate. Residues His-60 and Glu-64 each contribute to the Zn(2+) site. Substrate is bound by residues Glu-64, 93-94 (ND), 119-121 (STS), Ser-124, and Gln-174. Gln-174 and His-182 together coordinate Zn(2+).

Belongs to the SIS family. GmhA subfamily. Homotetramer. It depends on Zn(2+) as a cofactor.

Its subcellular location is the cytoplasm. The enzyme catalyses 2 D-sedoheptulose 7-phosphate = D-glycero-alpha-D-manno-heptose 7-phosphate + D-glycero-beta-D-manno-heptose 7-phosphate. The protein operates within carbohydrate biosynthesis; D-glycero-D-manno-heptose 7-phosphate biosynthesis; D-glycero-alpha-D-manno-heptose 7-phosphate and D-glycero-beta-D-manno-heptose 7-phosphate from sedoheptulose 7-phosphate: step 1/1. Its function is as follows. Catalyzes the isomerization of sedoheptulose 7-phosphate in D-glycero-D-manno-heptose 7-phosphate. This chain is Phosphoheptose isomerase, found in Azoarcus sp. (strain BH72).